The sequence spans 1135 residues: Phytochrome C (1135 aa).

A compositionally biased stretch (polar residues) spans 1–11; it reads MSSPLNNRGTC. The segment at 1–26 is disordered; sequence MSSPLNNRGTCSRSSSARSRHSARVV. The GAF domain maps to 216 to 399; that stretch reads NLSLLCDVLV…VFGIQLNKEV (184 aa). Cysteine 321 lines the phytochromobilin pocket. PAS domains are found at residues 618–688 and 748–822; these read VTNE…LQGI and IQGD…TKLS. Residues 902-1122 enclose the Histidine kinase domain; that stretch reads YIHQELRNPL…IILIEFPVAQ (221 aa).

This sequence belongs to the phytochrome family. Homodimer. Post-translationally, contains one covalently linked phytochromobilin chromophore.

Functionally, regulatory photoreceptor which exists in two forms that are reversibly interconvertible by light: the Pr form that absorbs maximally in the red region of the spectrum and the Pfr form that absorbs maximally in the far-red region. Photoconversion of Pr to Pfr induces an array of morphogenic responses, whereas reconversion of Pfr to Pr cancels the induction of those responses. Pfr controls the expression of a number of nuclear genes including those encoding the small subunit of ribulose-bisphosphate carboxylase, chlorophyll A/B binding protein, protochlorophyllide reductase, rRNA, etc. It also controls the expression of its own gene(s) in a negative feedback fashion. The protein is Phytochrome C (PHYC) of Sorghum bicolor (Sorghum).